The sequence spans 337 residues: Anthraniloyl-CoA anthraniloyltransferase (337 aa).

Anthraniloyl-CoA-binding residues include threonine 29 and phenylalanine 33. Catalysis depends on cysteine 113, which acts as the Acyl-thioester intermediate. Residues 154–155 (RN), 221–224 (MRGR), and histidine 258 contribute to the anthraniloyl-CoA site.

It belongs to the thiolase-like superfamily. FabH family. Homodimer.

It localises to the cytoplasm. It catalyses the reaction anthraniloyl-CoA + malonyl-CoA + H(+) = (2-aminobenzoyl)acetyl-CoA + CO2 + CoA. Required for the biosynthesis of a number of signaling molecules, such as the quinolone signal 2-heptyl-3-hydroxy-4(1H)-quinolone (PQS), 2-heptyl-4-hydroxyquinoline (HHQ) and 2,4-dihydroxyquinoline (DHQ). These molecules are required for normal biofilm formation. Catalyzes the transfer of the anthraniloyl moiety from anthraniloyl-CoA to malonyl-CoA to form 2-aminobenzoylacetyl-CoA. The first step of the reaction is the formation of a covalent anthraniloyl-PqsD intermediate. Next, the short-lived intermediate 3-(2-aminophenyl)-3-oxopropanoyl-CoA is formed. An intramolecular rearrangement of this intermediate can give rise to 2,4-dihydroxyquinoline (DHQ). This chain is Anthraniloyl-CoA anthraniloyltransferase (pqsD), found in Pseudomonas aeruginosa (strain ATCC 15692 / DSM 22644 / CIP 104116 / JCM 14847 / LMG 12228 / 1C / PRS 101 / PAO1).